The chain runs to 179 residues: Large ribosomal subunit protein uL5 (179 aa).

The protein belongs to the universal ribosomal protein uL5 family. Part of the 50S ribosomal subunit; part of the 5S rRNA/L5/L18/L25 subcomplex. Contacts the 5S rRNA and the P site tRNA. Forms a bridge to the 30S subunit in the 70S ribosome.

Its function is as follows. This is one of the proteins that bind and probably mediate the attachment of the 5S RNA into the large ribosomal subunit, where it forms part of the central protuberance. In the 70S ribosome it contacts protein S13 of the 30S subunit (bridge B1b), connecting the 2 subunits; this bridge is implicated in subunit movement. Contacts the P site tRNA; the 5S rRNA and some of its associated proteins might help stabilize positioning of ribosome-bound tRNAs. In Aromatoleum aromaticum (strain DSM 19018 / LMG 30748 / EbN1) (Azoarcus sp. (strain EbN1)), this protein is Large ribosomal subunit protein uL5.